Reading from the N-terminus, the 309-residue chain is Sulfate adenylyltransferase subunit 2 (309 aa).

Belongs to the PAPS reductase family. CysD subfamily. As to quaternary structure, heterodimer composed of CysD, the smaller subunit, and CysN.

The enzyme catalyses sulfate + ATP + H(+) = adenosine 5'-phosphosulfate + diphosphate. Its pathway is sulfur metabolism; hydrogen sulfide biosynthesis; sulfite from sulfate: step 1/3. Its function is as follows. With CysN forms the ATP sulfurylase (ATPS) that catalyzes the adenylation of sulfate producing adenosine 5'-phosphosulfate (APS) and diphosphate, the first enzymatic step in sulfur assimilation pathway. APS synthesis involves the formation of a high-energy phosphoric-sulfuric acid anhydride bond driven by GTP hydrolysis by CysN coupled to ATP hydrolysis by CysD. In Mycobacterium sp. (strain JLS), this protein is Sulfate adenylyltransferase subunit 2.